A 171-amino-acid polypeptide reads, in one-letter code: MKFALVLLGVCAFYLVNATGDLETELEASELQELQEALDLIAETPLESLEAEELEEARKFKLPKINWGKLASKAKDVYKKGQKLAKNKNVKKALKYGKQLAENLAAGEVHEPGTPVGNNKCWAIGTRCTDDCDCCPEHHCHCPAKSWTFGLIPCSCQVTESDKVNKCPPAE.

Residues 1–18 form the signal peptide; it reads MKFALVLLGVCAFYLVNA. A propeptide spans 19–58 (removed in mature form); that stretch reads TGDLETELEASELQELQEALDLIAETPLESLEAEELEEAR. Residues 59–104 are linear cationic cytotoxin domain; it reads KFKLPKINWGKLASKAKDVYKKGQKLAKNKNVKKALKYGKQLAENL. Residues 118–171 enclose the Oxytoxin-type inhibitor cystine knot (ICK) domain; the sequence is NNKCWAIGTRCTDDCDCCPEHHCHCPAKSWTFGLIPCSCQVTESDKVNKCPPAE. 5 cysteine pairs are disulfide-bonded: Cys121–Cys135, Cys128–Cys140, Cys132–Cys167, Cys134–Cys156, and Cys142–Cys154.

In terms of processing, disulfide bonds. In terms of tissue distribution, expressed by the venom gland.

It localises to the secreted. Its function is as follows. Has antimicrobial, insecticidal, cytolytic and cytotoxic activity. In Oxyopes takobius (Lynx spider), this protein is Spiderine-2a.